The sequence spans 385 residues: tRNA(Met) cytidine acetate ligase (385 aa).

ATP-binding positions include 7–20 (VAEY…HEFL), Gly101, Asn153, and Arg178.

This sequence belongs to the TmcAL family.

It localises to the cytoplasm. The enzyme catalyses cytidine(34) in elongator tRNA(Met) + acetate + ATP = N(4)-acetylcytidine(34) in elongator tRNA(Met) + AMP + diphosphate. Its function is as follows. Catalyzes the formation of N(4)-acetylcytidine (ac(4)C) at the wobble position of elongator tRNA(Met), using acetate and ATP as substrates. First activates an acetate ion to form acetyladenylate (Ac-AMP) and then transfers the acetyl group to tRNA to form ac(4)C34. The chain is tRNA(Met) cytidine acetate ligase from Lactobacillus gasseri (strain ATCC 33323 / DSM 20243 / BCRC 14619 / CIP 102991 / JCM 1131 / KCTC 3163 / NCIMB 11718 / NCTC 13722 / AM63).